The sequence spans 283 residues: Bifunctional protein FolD (283 aa).

NADP(+) contacts are provided by residues 166-168 and Ile232; that span reads GAS.

This sequence belongs to the tetrahydrofolate dehydrogenase/cyclohydrolase family. In terms of assembly, homodimer.

It catalyses the reaction (6R)-5,10-methylene-5,6,7,8-tetrahydrofolate + NADP(+) = (6R)-5,10-methenyltetrahydrofolate + NADPH. It carries out the reaction (6R)-5,10-methenyltetrahydrofolate + H2O = (6R)-10-formyltetrahydrofolate + H(+). It functions in the pathway one-carbon metabolism; tetrahydrofolate interconversion. Its function is as follows. Catalyzes the oxidation of 5,10-methylenetetrahydrofolate to 5,10-methenyltetrahydrofolate and then the hydrolysis of 5,10-methenyltetrahydrofolate to 10-formyltetrahydrofolate. The protein is Bifunctional protein FolD of Mannheimia succiniciproducens (strain KCTC 0769BP / MBEL55E).